A 446-amino-acid chain; its full sequence is Endoplasmic reticulum membrane adapter protein XK (446 aa).

The Cytoplasmic segment spans residues M1–K2. The helical transmembrane segment at F3–Y23 threads the bilayer. The Extracellular segment spans residues L24 to Q37. Residues V38 to V58 traverse the membrane as a helical segment. Residues H59–L68 lie on the Cytoplasmic side of the membrane. The chain crosses the membrane as a helical span at residues A69–I89. Topologically, residues Y90–S140 are extracellular. S115 carries the post-translational modification Phosphoserine. A helical transmembrane segment spans residues V141–L161. Over E162 to F171 the chain is Cytoplasmic. A helical transmembrane segment spans residues I172 to I192. At K193–Y208 the chain is on the extracellular side. A helical membrane pass occupies residues V209–F229. Residues T230–I235 are Cytoplasmic-facing. The helical transmembrane segment at W236–F256 threads the bilayer. Residues W257–T277 lie on the Extracellular side of the membrane. Residues I278–V298 form a helical membrane-spanning segment. Residues Q299–L317 lie on the Cytoplasmic side of the membrane. A helical transmembrane segment spans residues L318–F338. At K339–P349 the chain is on the extracellular side. Residues L350 to Y370 form a helical membrane-spanning segment. At Q371–A446 the chain is on the cytoplasmic side.

The protein belongs to the XK family. In terms of assembly, heterodimer with Kell; disulfide-linked. Interacts with VPS13A.

It localises to the endoplasmic reticulum membrane. Recruits the lipid transfer protein VPS13A from lipid droplets to the endoplasmic reticulum (ER) membrane. In Mus musculus (Mouse), this protein is Endoplasmic reticulum membrane adapter protein XK.